We begin with the raw amino-acid sequence, 503 residues long: MTVFEVKYEDLAGRIGTLRTRSGTLETPAFFPVINVLKKDEISIDEIRNIGFKNFITNSYILYKNNYIKDDIHKELRSEEMIIMTDSGAYQILEYGEIGITNLQIVNYQLKIKPDIGVILDLPTGNINDYDNAKKTVYETLKRAEEASEIIVKNQDNNIIWVYPIQGGRYLDLVKTSAEGLSKFEHIYNMAALGSPTVLLEKYMYDTVIDMIYTAKSNIKRGIPFHLFGGGLPHIIPFAVALGVDSFDSASYIIYARDNRYITRTRVYKLEDLEYFPCSCPICSKYTPKDLLEMNEKERTKALAIHNLYTILEEFKATKQAIKEGRLFEYLQEKAYSHPAVYSAFKRLMKYKDYLEKFDPRIRGDPKGLFLFDGNSLHRPEIIRHSRFLERYIQKKDKISIYCYDKAISDTAYDFKEKIREKIADRNESDVFIAVPFFGLIPLEISDSYPLSQFEIPNEIDEDVIDDMKTKIISFLRRNNYQKVELINCEKLGLHIDSISTSS.

The active-site Nucleophile is Asp-86. A substrate-binding site is contributed by Asp-121. The Zn(2+) site is built by Cys-278, Cys-280, and Cys-283.

Belongs to the archaeosine tRNA-ribosyltransferase family. Zn(2+) serves as cofactor.

The enzyme catalyses guanosine(15) in tRNA + 7-cyano-7-deazaguanine = 7-cyano-7-carbaguanosine(15) in tRNA + guanine. It participates in tRNA modification; archaeosine-tRNA biosynthesis. Exchanges the guanine residue with 7-cyano-7-deazaguanine (preQ0) at position 15 in the dihydrouridine loop (D-loop) of archaeal tRNAs. The protein is tRNA-guanine(15) transglycosylase of Saccharolobus solfataricus (strain ATCC 35092 / DSM 1617 / JCM 11322 / P2) (Sulfolobus solfataricus).